Here is a 149-residue protein sequence, read N- to C-terminus: UPF0179 protein TON_1048 (149 aa).

It belongs to the UPF0179 family.

The chain is UPF0179 protein TON_1048 from Thermococcus onnurineus (strain NA1).